The following is a 529-amino-acid chain: Calcium-dependent protein kinase 3 (529 aa).

Positions 1 to 73 (MGHRHSKSKS…GRILGRPMEE (73 aa)) are disordered. A lipid anchor (N-myristoyl glycine) is attached at Gly2. A compositionally biased stretch (gly residues) spans 39–53 (SGSGTVGSSGSGTGG). Residues 78–336 (YEFGRELGRG…AAEVLNHPWI (259 aa)) form the Protein kinase domain. Residues 84-92 (LGRGQFGVT) and Lys107 each bind ATP. Asp202 acts as the Proton acceptor in catalysis. Ser242 is subject to Phosphoserine. The autoinhibitory domain stretch occupies residues 342 to 372 (ASDKPLDNAVLSRMKQFRAMNKLKKMALKVI). 4 EF-hand domains span residues 379–414 (EEIIGLKEMFKSLDTDNNGIVTLEELRTGLPKLGSK), 415–450 (ISEAEIRQLMEAADMDGDGSIDYLEFISATMHMNRI), 451–485 (EREDHLYTAFQFFDNDNSGYITMEELELAMKKYNM), and 486–521 (GDDKSIKEIIAEVDTDRDGKINYEEFVAMMKKGNPE). Asp392, Asp394, Asn396, Glu403, Asp428, Asp430, Asp432, Ser434, Glu439, Asp464, Asp466, Ser468, Tyr470, Glu475, Asp499, Asp501, Asp503, Lys505, and Glu510 together coordinate Ca(2+).

It belongs to the protein kinase superfamily. Ser/Thr protein kinase family. CDPK subfamily. Interacts with GHR1. Expressed in both guard cells and mesophyll cells.

The protein localises to the cytoplasm. The protein resides in the nucleus. It carries out the reaction L-seryl-[protein] + ATP = O-phospho-L-seryl-[protein] + ADP + H(+). The enzyme catalyses L-threonyl-[protein] + ATP = O-phospho-L-threonyl-[protein] + ADP + H(+). Its activity is regulated as follows. Activated by calcium. Autophosphorylation may play an important role in the regulation of the kinase activity. May play a role in signal transduction pathways that involve calcium as a second messenger. Functions in abscisic acid (ABA) regulation of guard cell S-type anion- and Ca(2+)-permeable channels and stomatal closure. In Arabidopsis thaliana (Mouse-ear cress), this protein is Calcium-dependent protein kinase 3.